Consider the following 424-residue polypeptide: MAAGPISERNQDATVYVGGLDEKVSEPLLWELFLQAGPVVNTHMPKDRVTGQHQGYGFVEFLSEEDADYAIKIMNMIKLYGKPIRVNKASAHNKNLDVGANIFIGNLDPEIDEKLLYDTFSAFGVILQTPKIMRDPDTGNSKGYAFINFASFDASDAAIEAMNGQYLCNRPITVSYAFKKDSKGERHGSAAERLLAAQNPLSQADRPHQLFADAPPPPSAPNPVVSSLGSGLPPPGMPPPGSFPPPVPPPGALPPGIPPAMPPPPMPPGAAGHGPPSAGTPGAGHPGHGHSHPHPFPPGGMPHPGMSQMQLAHHGPHGLGHPHAGPPGSGGQPPPRPPPGMPHPGPPPMGMPPRGPPFGSPMGHPGPMPPHGMRGPPPLMPPHGYTGPPRPPPYGYQRGPLPPPRPTPRPPVPPRGPLRGPLPQ.

A2 is subject to N-acetylalanine. 2 consecutive RRM domains span residues 13 to 91 and 100 to 179; these read ATVY…KASA and ANIF…YAFK. Position 56 is a phosphotyrosine (Y56). The interval 207 to 424 is disordered; it reads PHQLFADAPP…RGPLRGPLPQ (218 aa). A compositionally biased stretch (low complexity) spans 222-231; the sequence is NPVVSSLGSG. The segment covering 232–268 has biased composition (pro residues); that stretch reads LPPPGMPPPGSFPPPVPPPGALPPGIPPAMPPPPMPP. Low complexity-rich tracts occupy residues 269–280 and 303–323; these read GAAGHGPPSAGT and HPGM…GHPH. Pro residues-rich tracts occupy residues 332 to 381 and 388 to 424; these read QPPP…PLMP and PPRP…PLPQ.

It belongs to the SF3B4 family. As to quaternary structure, component of the 17S U2 SnRNP complex, a ribonucleoprotein complex that contains small nuclear RNA (snRNA) U2 and a number of specific proteins. Part of the SF3B subcomplex of the 17S U2 SnRNP complex. SF3B associates with the splicing subcomplex SF3A and a 12S RNA unit to form the U2 small nuclear ribonucleoproteins complex (U2 snRNP). SF3B4 has been found in complex spliceosome 'B' and 'C' as well. Component of the minor (U12-type spliceosome) spliceosome. Found in a complex with PRMT9, SF3B2 and SF3B4.

The protein localises to the nucleus. In terms of biological role, component of the 17S U2 SnRNP complex of the spliceosome, a large ribonucleoprotein complex that removes introns from transcribed pre-mRNAs. The 17S U2 SnRNP complex (1) directly participates in early spliceosome assembly and (2) mediates recognition of the intron branch site during pre-mRNA splicing by promoting the selection of the pre-mRNA branch-site adenosine, the nucleophile for the first step of splicing. Within the 17S U2 SnRNP complex, SF3B4 is part of the SF3B subcomplex, which is required for 'A' complex assembly formed by the stable binding of U2 snRNP to the branchpoint sequence in pre-mRNA. Sequence independent binding of SF3A and SF3B subcomplexes upstream of the branch site is essential, it may anchor U2 snRNP to the pre-mRNA. May also be involved in the assembly of the 'E' complex. Also acts as a component of the minor spliceosome, which is involved in the splicing of U12-type introns in pre-mRNAs. This Homo sapiens (Human) protein is Splicing factor 3B subunit 4 (SF3B4).